A 353-amino-acid polypeptide reads, in one-letter code: 3'(2'),5'-bisphosphate nucleotidase 1 (353 aa).

Asp-46 serves as the catalytic Proton acceptor. Mg(2+) contacts are provided by Glu-71, Asp-134, Ile-136, and Asp-137. Residue Thr-139 is the Proton acceptor of the active site. Adenosine 3',5'-bisphosphate contacts are provided by Thr-139, His-235, Ser-259, Lys-262, Arg-276, and Asp-288. AMP contacts are provided by His-235, Ser-259, Lys-262, Arg-276, and Asp-288. Asp-288 contacts Mg(2+).

Belongs to the inositol monophosphatase superfamily. The cofactor is Mg(2+). As to expression, expressed in roots, leaves, stems, flowers and siliques.

It carries out the reaction 3'-phosphoadenylyl sulfate + H2O = adenosine 5'-phosphosulfate + phosphate. It catalyses the reaction adenosine 3',5'-bisphosphate + H2O = AMP + phosphate. The enzyme catalyses adenosine 2',5'-bisphosphate + H2O = AMP + phosphate. The catalysed reaction is 1D-myo-inositol 1,4-bisphosphate + H2O = 1D-myo-inositol 4-phosphate + phosphate. It carries out the reaction 1D-myo-inositol 1,3,4-trisphosphate + H2O = 1D-myo-inositol 3,4-bisphosphate + phosphate. The protein operates within signal transduction; phosphatidylinositol signaling pathway. With respect to regulation, inhibited non-competitively by Li(+) (IC(50)=0.20 mM) and Na(+) (IC(50)=200 mM). Phosphatase that converts adenosine 3'-phosphate 5'-phosphosulfate (PAPS) to adenosine 5'-phosphosulfate (APS) and 3'(2')-phosphoadenosine 5'-phosphate (PAP) to AMP. May regulate the flux of sulfur in the sulfur-activation pathway by converting PAPS to APS. May play a role in the biosynthesis of sulfate conjugates and RNA processing. Is also able to hydrolyze inositol 1,4-bisphosphate and inositol 1,3,4-trisphosphate. Could be considered as a negative regulator of abscisic acid (ABA)- and stress-responsive genes, through modulating the inositol 1,4,5-trisphosphate (IP3) turnover. Is also involved in salt tolerance. Acts as a suppressor of virus- and transgene-induced silencing. This is 3'(2'),5'-bisphosphate nucleotidase 1 from Arabidopsis thaliana (Mouse-ear cress).